The chain runs to 198 residues: MRKSKRERQRLLQETIQENPFITDEELAEKFSVSVQTIRLDRLELSIPELRERIKHVAQQSLADKVRSLPIEEVIGEIIDIEPDHSAISIFDVKSEHVFKRNRIARGHHLFAQANSLAVAVINDELALTAKANIRFTRQVKENERVVAKAKVVGEKENGRTIVEVNSYVGQELVFSGTFEMYRSNREKKDGDSNENSN.

The MaoC-like domain occupies 102 to 169 (NRIARGHHLF…RTIVEVNSYV (68 aa)).

The protein belongs to the FapR family.

Functionally, transcriptional factor involved in regulation of membrane lipid biosynthesis by repressing genes involved in fatty acid and phospholipid metabolism. The sequence is that of Transcription factor FapR from Geobacillus sp. (strain WCH70).